We begin with the raw amino-acid sequence, 124 residues long: MTAFLAVGFGAAVGAWLRWGLGLWLNPAYPAMPLGTLAANVIGGYFIGLVLAWFAEHPGVPPEARLFVITGLLGGLTTFSTFSAEVVTALTRGLWLTGSLIAFAHLAGSFIATGLGFYSLKFLK.

Transmembrane regions (helical) follow at residues 4–24, 34–54, 67–87, and 100–120; these read FLAV…LGLW, LGTL…LAWF, FVIT…AEVV, and LIAF…FYSL. 2 residues coordinate Na(+): G74 and T77.

The protein belongs to the fluoride channel Fluc/FEX (TC 1.A.43) family.

The protein localises to the cell inner membrane. The catalysed reaction is fluoride(in) = fluoride(out). Na(+) is not transported, but it plays an essential structural role and its presence is essential for fluoride channel function. Fluoride-specific ion channel. Important for reducing fluoride concentration in the cell, thus reducing its toxicity. The polypeptide is Fluoride-specific ion channel FluC (Thiobacillus denitrificans (strain ATCC 25259 / T1)).